A 220-amino-acid polypeptide reads, in one-letter code: 7-cyano-7-deazaguanine synthase (220 aa).

11 to 21 (VSGGMDSVTLM) lines the ATP pocket. Zn(2+)-binding residues include Cys186, Cys194, Cys197, and Cys200.

It belongs to the QueC family. Zn(2+) serves as cofactor.

The catalysed reaction is 7-carboxy-7-deazaguanine + NH4(+) + ATP = 7-cyano-7-deazaguanine + ADP + phosphate + H2O + H(+). It participates in purine metabolism; 7-cyano-7-deazaguanine biosynthesis. Functionally, catalyzes the ATP-dependent conversion of 7-carboxy-7-deazaguanine (CDG) to 7-cyano-7-deazaguanine (preQ(0)). This Porphyromonas gingivalis (strain ATCC BAA-308 / W83) protein is 7-cyano-7-deazaguanine synthase.